A 1651-amino-acid polypeptide reads, in one-letter code: Roundabout homolog 1 (1651 aa).

An N-terminal signal peptide occupies residues 1-25; that stretch reads MKWKHVPFLVMISLLSLSPNHLFLA. At 26–897 the chain is on the extracellular side; sequence QLIPDPEDVE…QQISDVVKQP (872 aa). Residues 33 to 57 form a disordered region; it reads DVERGNDHGTPIPTSDNDDNSLGYT. Over residues 44–56 the composition is skewed to polar residues; that stretch reads IPTSDNDDNSLGY. Ig-like C2-type domains lie at 68–164, 170–257, 262–346, 351–446, and 455–541; these read PRIV…ASLE, DDFR…AELT, PSFV…ATLT, PHFV…LEVT, and PVIR…AYIE. The cysteines at positions 89 and 147 are disulfide-linked. A glycan (N-linked (GlcNAc...) asparagine) is linked at asparagine 160. Disulfide bonds link cysteine 191/cysteine 240, cysteine 283/cysteine 330, and cysteine 372/cysteine 428. Asparagine 463 carries N-linked (GlcNAc...) asparagine glycosylation. Cysteine 476 and cysteine 525 are disulfide-bonded. 3 consecutive Fibronectin type-III domains span residues 563–657, 676–773, and 778–874; these read APSK…TQDV, AVLH…TLEE, and PPQG…LDAH. N-linked (GlcNAc...) asparagine glycosylation is found at asparagine 790, asparagine 820, and asparagine 827. A helical membrane pass occupies residues 898 to 918; it reads AFIAGIGAACWIILMVFSIWL. Residues 919–1651 are Cytoplasmic-facing; sequence YRHRKKRNGL…NNEELEETES (733 aa). Serine 940 is modified (phosphoserine). Residue threonine 948 is modified to Phosphothreonine. Position 1038 is a phosphotyrosine; by ABL; in vitro (tyrosine 1038). Serine 1055 carries the phosphoserine modification. 2 positions are modified to phosphotyrosine; by ABL; in vitro: tyrosine 1073 and tyrosine 1114. Disordered regions lie at residues 1124-1202, 1224-1337, 1352-1397, and 1420-1651; these read KDYR…SEEY, YLQQ…ADME, EQTP…DGSF, and RRQM…ETES. Residues 1137 to 1146 are compositionally biased toward polar residues; sequence PYNQSYDQNT. The segment covering 1147-1163 has biased composition (low complexity); sequence GGSYNSSDRGSSTSGSQ. Residues 1186–1196 are compositionally biased toward pro residues; sequence LPPPPAHPPPH. Threonine 1240 is modified (phosphothreonine). Positions 1255–1269 are enriched in polar residues; sequence YSHQSTATLTPSPQE. The segment covering 1281–1293 has biased composition (basic and acidic residues); sequence ETGHMQHQPDRRR. The span at 1296 to 1307 shows a compositional bias: pro residues; that stretch reads VSPPPPPRPISP. Phosphoserine is present on serine 1297. The span at 1322-1336 shows a compositional bias: acidic residues; the sequence is MDTDAPEEEEDEADM. Positions 1384-1397 are enriched in low complexity; it reads SSGRSSVSSSDGSF. Over residues 1438-1451 the composition is skewed to polar residues; the sequence is PRPTSPVSTDSNMS. Basic residues predominate over residues 1459-1470; the sequence is RPAKKLKHQPGH. Pro residues predominate over residues 1480 to 1490; sequence LPPPPVPPPAI. 2 stretches are compositionally biased toward basic and acidic residues: residues 1516 to 1541 and 1549 to 1573; these read ARTDRSSDRKGSSYKGREVLDGRQVV and DPREAQEQQNDGKGRGNKAAKRDLP. Over residues 1592–1601 the composition is skewed to polar residues; the sequence is FPTSNNPRDP. Residues 1602-1614 are compositionally biased toward low complexity; sequence SSSSSMSSRGSGS. The segment covering 1642–1651 has biased composition (acidic residues); the sequence is NNEELEETES.

The protein belongs to the immunoglobulin superfamily. ROBO family. In terms of assembly, homodimer. Dimerization is mediated by the extracellular domain and is independent of SLIT liganding. Interacts with SLIT1. Interacts with SLIT2. Interacts with FLRT3. Interacts with MYO9B (via Rho-GAP domain). Ubiquitinated. May be deubiquitinated by USP33. Widely expressed, with exception of kidney.

It localises to the cell membrane. The protein localises to the cell projection. The protein resides in the axon. It is found in the endoplasmic reticulum-Golgi intermediate compartment membrane. Its function is as follows. Receptor for SLIT1 and SLIT2 that mediates cellular responses to molecular guidance cues in cellular migration, including axonal navigation at the ventral midline of the neural tube and projection of axons to different regions during neuronal development. Interaction with the intracellular domain of FLRT3 mediates axon attraction towards cells expressing NTN1. In axon growth cones, the silencing of the attractive effect of NTN1 by SLIT2 may require the formation of a ROBO1-DCC complex. Plays a role in the regulation of cell migration via its interaction with MYO9B; inhibits MYO9B-mediated stimulation of RHOA GTPase activity, and thereby leads to increased levels of active, GTP-bound RHOA. May be required for lung development. This chain is Roundabout homolog 1 (ROBO1), found in Homo sapiens (Human).